Consider the following 350-residue polypeptide: MGCFFSKRRKADKESRPENEEERPKQYSWDQREKVDPKDYMFSGLKDETVGRLPGTVAGQQFLIQDCENCNIYIFDHSATVTIDDCTNCIIFLGPVKGSVFFRNCRDCKCTLACQQFRVRDCRKLEVFLCCATQPIIESSSNIKFGCFQWYYPELAFQFKDAGLSIFNNTWSNIHDFTPVSGELNWSLLPEDAVVQDYVPIPTTEELKAVRVSTEANRSIVPISRGQRQKSSDESCLVVLFAGDYTIANARKLIDEMVGKGFFLVQTKEVSMKAEDAQRVFREKAPDFLPLLNKGPVIALEFNGDGAVEVCQLIVNEIFNGTKMFVSESKETASGDVDSFYNFADIQMGI.

Residues 1–10 show a composition bias toward basic residues; it reads MGCFFSKRRK. Residues 1-31 are disordered; that stretch reads MGCFFSKRRKADKESRPENEEERPKQYSWDQ. Glycine 2 carries N-myristoyl glycine lipidation. Cysteine 3 is lipidated: S-palmitoyl cysteine. Residues 11–31 show a composition bias toward basic and acidic residues; it reads ADKESRPENEEERPKQYSWDQ. Positions 24-179 constitute a C-CAP/cofactor C-like domain; it reads PKQYSWDQRE…TWSNIHDFTP (156 aa). GTP is bound by residues 98–99 and 115–118; these read GS and QQFR.

This sequence belongs to the TBCC family. As to quaternary structure, found in a complex with ARL3, RP2 and UNC119 (or UNC119B); RP2 induces hydrolysis of GTP ARL3 in the complex, leading to the release of UNC119 (or UNC119B). Interacts with ARL3; interaction is direct and stimulated with the activated GTP-bound form of ARL3. In terms of processing, myristoylated on Gly-2; which may be required for membrane targeting. Palmitoylated on Cys-3; which may be required for plasma membrane targeting. Mutation of Cys-3 targets the protein to internal membranes. Ubiquitous. Expressed in the rod and cone photoreceptors, extending from the tips of the outer segment (OS) through the inner segment (IS) and outer nuclear layer (ONL) and into the synaptic terminals of the outer plexiform layer (ONL). Also detected in the bipolar, horizontal and amacrine cells in the inner nuclear layer (INL), extending to the inner plexiform layer (IPL) and though the ganglion cell layer (GCL) and into the nerve fiber layer (NFL) (at protein level).

It is found in the cell membrane. The protein localises to the cell projection. It localises to the cilium. Its function is as follows. Acts as a GTPase-activating protein (GAP) involved in trafficking between the Golgi and the ciliary membrane. Involved in localization of proteins, such as NPHP3, to the cilium membrane by inducing hydrolysis of GTP ARL3, leading to the release of UNC119 (or UNC119B). Acts as a GTPase-activating protein (GAP) for tubulin in concert with tubulin-specific chaperone C, but does not enhance tubulin heterodimerization. Acts as a guanine nucleotide dissociation inhibitor towards ADP-ribosylation factor-like proteins. This is Protein XRP2 (RP2) from Homo sapiens (Human).